The sequence spans 184 residues: MVVVAISGQPGSGKTTVAREVARVLKLPMVSSGSIFRELAAKYGMDLLEFHKYAEQNTEIDKIVDSIALEKAKAGNVVLEGHLTAWIVRPYADVCIYLKASKEVRARRVAMRDGVSFDAALREIEERERLNKKRYLAIYEIDIDNLSIFDLVLDTSYLSINDTVRISLDFICTSLNSKYMKNFC.

Residue 8 to 16 coordinates ATP; that stretch reads GQPGSGKTT.

It belongs to the cytidylate kinase family. Type 2 subfamily.

The protein resides in the cytoplasm. It carries out the reaction CMP + ATP = CDP + ADP. The enzyme catalyses dCMP + ATP = dCDP + ADP. The sequence is that of Cytidylate kinase from Pyrobaculum calidifontis (strain DSM 21063 / JCM 11548 / VA1).